A 302-amino-acid chain; its full sequence is Oxygen-dependent coproporphyrinogen-III oxidase (302 aa).

S94 provides a ligand contact to substrate. A divalent metal cation is bound by residues H98 and H108. The active-site Proton donor is the H108. 110 to 112 (NVR) contributes to the substrate binding site. A divalent metal cation is bound by residues H147 and H177. The tract at residues 242 to 277 (YVEFNLVYDRGTLFGLQTGGRTESILMSMPPLVRWQ) is important for dimerization. 260 to 262 (GGR) lines the substrate pocket.

The protein belongs to the aerobic coproporphyrinogen-III oxidase family. As to quaternary structure, homodimer. Requires a divalent metal cation as cofactor.

It localises to the cytoplasm. It catalyses the reaction coproporphyrinogen III + O2 + 2 H(+) = protoporphyrinogen IX + 2 CO2 + 2 H2O. The protein operates within porphyrin-containing compound metabolism; protoporphyrin-IX biosynthesis; protoporphyrinogen-IX from coproporphyrinogen-III (O2 route): step 1/1. Its function is as follows. Involved in the heme biosynthesis. Catalyzes the aerobic oxidative decarboxylation of propionate groups of rings A and B of coproporphyrinogen-III to yield the vinyl groups in protoporphyrinogen-IX. This Shewanella oneidensis (strain ATCC 700550 / JCM 31522 / CIP 106686 / LMG 19005 / NCIMB 14063 / MR-1) protein is Oxygen-dependent coproporphyrinogen-III oxidase.